The primary structure comprises 127 residues: Histone H2B type 1-A (127 aa).

Position 2 is an N-acetylproline (Pro-2). 7 positions are modified to N6-acetyllysine; alternate: Lys-7, Lys-13, Lys-14, Lys-17, Lys-18, Lys-22, and Lys-25. An N6-crotonyllysine; alternate mark is found at Lys-7, Lys-13, Lys-14, Lys-17, Lys-18, Lys-22, Lys-25, and Lys-36. 2 positions are modified to N6-lactoyllysine; alternate: Lys-7 and Lys-13. Lys-7 participates in a covalent cross-link: Glycyl lysine isopeptide (Lys-Gly) (interchain with G-Cter in SUMO2); alternate. Lys-17, Lys-18, Lys-22, and Lys-25 each carry N6-lactoyllysine; alternate. A Glycyl lysine isopeptide (Lys-Gly) (interchain with G-Cter in SUMO2); alternate cross-link involves residue Lys-22. Lys-36 is modified (N6-succinyllysine; alternate). Residue Lys-36 forms a Glycyl lysine isopeptide (Lys-Gly) (interchain with G-Cter in ubiquitin); alternate linkage. Ser-38 bears the Phosphoserine mark. Lys-45 bears the N6-lactoyllysine; alternate mark. Lys-48 bears the N6-methyllysine mark. Position 59 is an N6,N6-dimethyllysine (Lys-59). Residue Arg-81 is modified to Dimethylated arginine. Position 87 is an N6-acetyllysine; alternate (Lys-87). Residue Lys-87 is modified to N6-lactoyllysine; alternate. Lys-87 carries the N6,N6,N6-trimethyllysine; alternate modification. Arg-88 and Arg-94 each carry omega-N-methylarginine. Lys-110 is modified (N6-lactoyllysine; alternate). An N6-methyllysine modification is found at Lys-110. At Thr-117 the chain carries Phosphothreonine. Residues Lys-118 and Lys-122 each carry the N6-lactoyllysine; alternate modification. Residues Lys-118 and Lys-122 each carry the N6-succinyllysine; alternate modification. Lys-118 bears the N6-methylated lysine; alternate mark. Residue Lys-122 forms a Glycyl lysine isopeptide (Lys-Gly) (interchain with G-Cter in ubiquitin); alternate linkage.

Belongs to the histone H2B family. As to quaternary structure, the nucleosome is a histone octamer containing two molecules each of H2A, H2B, H3 and H4 assembled in one H3-H4 heterotetramer and two H2A-H2B heterodimers. Interacts with H2AB1; preferentially dimerizes with H2AB1 to form nucleosomes. Post-translationally, monoubiquitination at Lys-36 by the MSL1/MSL2 dimer is required for histone H3 'Lys-4' (H3K4me) and 'Lys-79' (H3K79me) methylation and transcription activation at specific gene loci, such as HOXA9 and MEIS1 loci. Similarly, monoubiquitination of Lys-122 (H2BK120Ub) by the RNF20/40 complex gives a specific tag for epigenetic transcriptional activation and is also prerequisite for histone H3 'Lys-4' and 'Lys-79' methylation. It also functions cooperatively with the FACT dimer to stimulate elongation by RNA polymerase II. H2BK120Ub also acts as a regulator of mRNA splicing: deubiquitination by USP49 is required for efficient cotranscriptional splicing of a large set of exons. Crotonylation (Kcr) is specifically present in male germ cells and marks testis-specific genes in post-meiotic cells, including X-linked genes that escape sex chromosome inactivation in haploid cells. Crotonylation marks active promoters and enhancers and confers resistance to transcriptional repressors. It is also associated with post-meiotically activated genes on autosomes. In terms of processing, acetylated during spermatogenesis. Acetylated form is most abundant in spermatogonia compared to spermatocytes and round spermatids. Post-translationally, phosphorylated at Thr-117 in spermatogonia, spermatocytes and round spermatids. Methylated at Lys-118 in spermatogonia, spermatocytes and round spermatids. In terms of processing, lactylated in macrophages by EP300/P300 by using lactoyl-CoA directly derived from endogenous or exogenous lactate, leading to stimulates gene transcription. In terms of tissue distribution, mainly expressed in testis, and the corresponding protein is also present in mature sperm. Also present in metaphase oocytes (at protein level).

The protein resides in the nucleus. The protein localises to the chromosome. Functionally, variant histone specifically required to direct the transformation of dissociating nucleosomes to protamine in male germ cells. Entirely replaces classical histone H2B prior nucleosome to protamine transition and probably acts as a nucleosome dissociating factor that creates a more dynamic chromatin, facilitating the large-scale exchange of histones. In condensing spermatids, the heterodimer between H2AB1 and H2BC1/TH2B is loaded onto the nucleosomes and promotes loading of transition proteins (TNP1 and TNP2) onto the nucleosomes. Inclusion of the H2AB1-H2BC1/TH2B dimer into chromatin opens the nucleosomes, releasing the nucleosomal DNA ends and allowing the invasion of nucleosomes by transition proteins (TNP1 and TNP2). Then, transition proteins drive the recruitment and processing of protamines, which are responsible for histone eviction. Also expressed maternally and is present in the female pronucleus, suggesting a similar role in protamine replacement by nucleosomes at fertilization. Core component of nucleosome. Nucleosomes wrap and compact DNA into chromatin, limiting DNA accessibility to the cellular machineries which require DNA as a template. Histones thereby play a central role in transcription regulation, DNA repair, DNA replication and chromosomal stability. DNA accessibility is regulated via a complex set of post-translational modifications of histones, also called histone code, and nucleosome remodeling. The sequence is that of Histone H2B type 1-A from Mus musculus (Mouse).